An 88-amino-acid chain; its full sequence is U-scoloptoxin(01)-Tl1a (88 aa).

Residues 1–16 (MSVYGLLSLLIFIVLA) form the signal peptide. A Chitin-binding type-2 domain is found at 25 to 81 (GKDCSEKEEYLYDSSNCDIFYECDESLKPQRMMCGPGTGWNQDKLVCDFLTNIDCTR). Cys-58 and Cys-71 are oxidised to a cystine.

The protein belongs to the scoloptoxin-01 family. Contains 3 disulfide bonds. In terms of tissue distribution, expressed by the venom gland.

The protein resides in the secreted. In Thereuopoda longicornis (Long-legged centipede), this protein is U-scoloptoxin(01)-Tl1a.